The chain runs to 140 residues: Protein KRTCAP2 homolog (140 aa).

The next 4 helical transmembrane spans lie at 11–31, 40–60, 74–94, and 98–118; these read LLSS…LRFC, LNVL…LTCV, AKLV…AGIV, and CATT…RISI.

It belongs to the KRTCAP2 family. Component of the oligosaccharyltransferase (OST) complex.

The protein localises to the membrane. Subunit of the oligosaccharyl transferase (OST) complex that catalyzes the initial transfer of a defined glycan (Glc(3)Man(9)GlcNAc(2) in eukaryotes) from the lipid carrier dolichol-pyrophosphate to an asparagine residue within an Asn-X-Ser/Thr consensus motif in nascent polypeptide chains, the first step in protein N-glycosylation. N-glycosylation occurs cotranslationally and the complex associates with the Sec61 complex at the channel-forming translocon complex that mediates protein translocation across the endoplasmic reticulum (ER). All subunits are required for a maximal enzyme activity. This Drosophila pseudoobscura pseudoobscura (Fruit fly) protein is Protein KRTCAP2 homolog.